We begin with the raw amino-acid sequence, 179 residues long: Nuclear transcription factor Y subunit B (179 aa).

Residues 1–32 (MAEAPASPGGGGGSHESGSPRGGGGGGSVREQ) are disordered. The span at 8-28 (PGGGGGSHESGSPRGGGGGGS) shows a compositional bias: gly residues. A DNA-binding region spans residues 36–42 (LPIANIS). The subunit association domain (SAD) stretch occupies residues 63 to 74 (VQECVSEFISFI). The segment at 147–179 (SSSAAEGMGQQGAYNQGMGYMQPQYHNGDISNV) is disordered.

The protein belongs to the NFYB/HAP3 subunit family. As to quaternary structure, heterotrimeric transcription factor composed of three components, NF-YA, NF-YB and NF-YC. NF-YB and NF-YC must interact and dimerize for NF-YA association and DNA binding.

It is found in the nucleus. Its function is as follows. Component of the NF-Y/HAP transcription factor complex. The NF-Y complex stimulates the transcription of various genes by recognizing and binding to a CCAAT motif in promoters. The chain is Nuclear transcription factor Y subunit B (NFY2) from Zea mays (Maize).